A 184-amino-acid chain; its full sequence is Peptide deformylase (184 aa).

Fe cation is bound by residues cysteine 111 and histidine 154. Residue glutamate 155 is part of the active site. Histidine 158 is a binding site for Fe cation.

The protein belongs to the polypeptide deformylase family. Requires Fe(2+) as cofactor.

It carries out the reaction N-terminal N-formyl-L-methionyl-[peptide] + H2O = N-terminal L-methionyl-[peptide] + formate. Removes the formyl group from the N-terminal Met of newly synthesized proteins. Requires at least a dipeptide for an efficient rate of reaction. N-terminal L-methionine is a prerequisite for activity but the enzyme has broad specificity at other positions. This Lactobacillus delbrueckii subsp. bulgaricus (strain ATCC 11842 / DSM 20081 / BCRC 10696 / JCM 1002 / NBRC 13953 / NCIMB 11778 / NCTC 12712 / WDCM 00102 / Lb 14) protein is Peptide deformylase.